The chain runs to 158 residues: C-type lection lectoxin-Enh3 (158 aa).

Residues 1–23 form the signal peptide; sequence MGQFTVVSLGLLAMFLSLSGAKG. Intrachain disulfides connect C26-C37, C54-C154, and C129-C146. Residues 33–155 enclose the C-type lectin domain; the sequence is RNGVCNKLFP…CASLHPFICQ (123 aa). Positions 119–121 match the Mannose-binding motif; sequence EPN. Ca(2+) is bound by residues E127, N142, and D143.

The protein belongs to the true venom lectin family. As to expression, expressed by the venom gland.

The protein localises to the secreted. Mannose-binding lectin which recognizes specific carbohydrate structures and agglutinates a variety of animal cells by binding to cell-surface glycoproteins and glycolipids. May be a calcium-dependent lectin. This Pseudoferania polylepis (Macleay's water snake) protein is C-type lection lectoxin-Enh3.